Consider the following 585-residue polypeptide: ADP-ribosylation factor-binding protein GGA2 (585 aa).

The VHS domain occupies 33-169; the sequence is ACRMSLAEPD…LLKYKGYAFP (137 aa). Glycyl lysine isopeptide (Lys-Gly) (interchain with G-Cter in ubiquitin) cross-links involve residues Lys180 and Lys287. A GAT domain is found at 196–321; sequence EIAQAAKLEE…LLEKFNLLKN (126 aa). The segment at 358–378 is disordered; sequence LDEAPSQGNNNTNGTGTPAAA. The span at 365–374 shows a compositional bias: low complexity; sequence GNNNTNGTGT. One can recognise a GAE domain in the interval 466-581; the sequence is TTTAPARTLV…TQAEETAVFT (116 aa).

As to quaternary structure, binds to ARF1 and ARF2.

The protein localises to the golgi apparatus. It is found in the trans-Golgi network. Its function is as follows. May play a role in the regulation of membrane traffic through the trans-Golgi network. This Saccharomyces cerevisiae (strain ATCC 204508 / S288c) (Baker's yeast) protein is ADP-ribosylation factor-binding protein GGA2 (GGA2).